The primary structure comprises 1720 residues: DNA-directed RNA polymerase I subunit RPA1 (1720 aa).

Residues cysteine 64, cysteine 67, cysteine 74, histidine 77, cysteine 104, and cysteine 107 each coordinate Zn(2+). The segment at 110–201 (LTCPRAVIHL…IALFWKAHMN (92 aa)) is clamp. Positions 205 and 208 each coordinate Zn(2+). Phosphoserine is present on serine 240. The clamp stretch occupies residues 320–426 (FTNGQTVNLQ…IRQILEKKEG (107 aa)). The tract at residues 403-416 (DSEMDKLMMDKYPG) is rudder. Residues lysine 424, arginine 429, and arginine 436 each coordinate DNA. The interval 468–542 (YPQPVTPWNV…QGTKIVCRHV (75 aa)) is involved in RRN3 binding to Pol I complex. Arginine 552 provides a ligand contact to RNA. Positions 588, 590, and 592 each coordinate Mg(2+). Aspartate 592 provides a ligand contact to RNA. A funnel region spans residues 805-883 (KPKADVKRQR…NEINKACMPF (79 aa)). The bridging helix stretch occupies residues 960-1001 (KPPEFFFHCMAGREGLVDTAVKTSRSGYLQRCIIKHLEGLVV). The tract at residues 1060–1155 (ADPKKALHHF…SLSVWRPDIY (96 aa)) is mediates the interaction with TOP2A. The interval 1207–1248 (PGEAVGLLAAQSIGEPSTQMTLNTFHFAGRGEMNVTLGIPRL) is trigger loop. Arginine 1249 serves as a coordination point for DNA. The segment at 1365–1498 (RNVNTRRATQ…SQEPQGPEAM (134 aa)) is disordered. Positions 1373–1390 (TQRDLDNAGELGRSRGEQ) are enriched in basic and acidic residues. Serine 1386 is modified (phosphoserine). 2 stretches are compositionally biased toward acidic residues: residues 1391–1412 (EGDE…DADA) and 1422–1446 (EEEV…EDMQ). Residues 1447 to 1461 (EERNPHREGARKTQE) show a composition bias toward basic and acidic residues. Positions 1462–1474 (QDEEVGLGTEEDP) are enriched in acidic residues.

The protein belongs to the RNA polymerase beta' chain family. As to quaternary structure, component of the RNA polymerase I (Pol I) complex consisting of 13 subunits: a ten-subunit catalytic core composed of POLR1A/RPA1, POLR1B/RPA2, POLR1C/RPAC1, POLR1D/RPAC2, POLR1H/RPA12, POLR2E/RPABC1, POLR2F/RPABC2, POLR2H/RPABC3, POLR2K/RPABC4 and POLR2L/RPABC5; a mobile stalk subunit POLR1F/RPA43 protruding from the core and additional subunits homologous to general transcription factors POLR1E/RPA49 and POLR1G/RPA34. Part of Pol I pre-initiation complex (PIC), in which Pol I core assembles with RRN3 and promoter-bound UTBF and SL1/TIF-IB complex. Interacts (via dock II domain) with TOP2A; this interaction may assist Pol I transcription initiation by releasing supercoils occurring during DNA unwinding. Interacts with CAVIN1; this interaction induces the dissociation of Pol I complex paused at rDNA terminator sequences. Interacts with MYO1C. Interacts with ERBB2. Interacts with DDX11. Interacts with RECQL5. The cofactor is Mg(2+).

It localises to the nucleus. Its subcellular location is the nucleolus. The protein localises to the chromosome. The enzyme catalyses RNA(n) + a ribonucleoside 5'-triphosphate = RNA(n+1) + diphosphate. In terms of biological role, catalytic core component of RNA polymerase I (Pol I), a DNA-dependent RNA polymerase which synthesizes ribosomal RNA precursors using the four ribonucleoside triphosphates as substrates. Transcribes 47S pre-rRNAs from multicopy rRNA gene clusters, giving rise to 5.8S, 18S and 28S ribosomal RNAs. Pol I-mediated transcription cycle proceeds through transcription initiation, transcription elongation and transcription termination stages. During transcription initiation, Pol I pre-initiation complex (PIC) is recruited by the selectivity factor 1 (SL1/TIF-IB) complex bound to the core promoter that precedes an rDNA repeat unit. The PIC assembly bends the promoter favoring the formation of the transcription bubble and promoter escape. Once the polymerase has escaped from the promoter it enters the elongation phase during which RNA is actively polymerized, based on complementarity with the template DNA strand. Highly processive, assembles in structures referred to as 'Miller trees' where many elongating Pol I complexes queue and transcribe the same rDNA coding regions. At terminator sequences downstream of the rDNA gene, PTRF interacts with Pol I and halts Pol I transcription leading to the release of the RNA transcript and polymerase from the DNA. Forms Pol I active center together with the second largest subunit POLR1B/RPA2. Appends one nucleotide at a time to the 3' end of the nascent RNA, with POLR1A/RPA1 contributing a Mg(2+)-coordinating DxDGD motif, and POLR1B/RPA2 participating in the coordination of a second Mg(2+) ion and providing lysine residues believed to facilitate Watson-Crick base pairing between the incoming nucleotide and the template base. Typically, Mg(2+) ions direct a 5' nucleoside triphosphate to form a phosphodiester bond with the 3' hydroxyl of the preceding nucleotide of the nascent RNA, with the elimination of pyrophosphate. Has proofreading activity: Pauses and backtracks to allow the cleavage of a missincorporated nucleotide via POLR1H/RPA12. High Pol I processivity is associated with decreased transcription fidelity. This chain is DNA-directed RNA polymerase I subunit RPA1, found in Homo sapiens (Human).